Here is a 643-residue protein sequence, read N- to C-terminus: Cell pattern formation-associated protein asm-1 (643 aa).

A disordered region spans residues 1–37; that stretch reads MNPNTPADVYYGQMSQGSSMPVTTVPSHSHYASQQPP. The segment covering 13–33 has biased composition (polar residues); it reads QMSQGSSMPVTTVPSHSHYAS. An HTH APSES-type domain is found at 116–222; sequence RVTATLWEDE…HNIGALLYHP (107 aa). The H-T-H motif DNA-binding region spans 150–171; sequence GTKLLNVAGMTRGRRDGILKSE. Residues 229–627 are disordered; that stretch reads SQVMAAAEQR…GSLPSPTYTA (399 aa). The segment covering 306–335 has biased composition (polar residues); the sequence is DGYQWSQQSMSGTQGNSSLSLDTSLGSNAR. Residues 336–349 show a composition bias toward low complexity; it reads SMPSTPATTPPGST. The segment covering 350 to 367 has biased composition (polar residues); sequence IQSMQNYPPVSQSYESSR. Residues 368-391 are compositionally biased toward low complexity; it reads QMYQGQSAQQAQYQSQQHYSSQPQ. 3 stretches are compositionally biased toward polar residues: residues 471-481, 529-551, and 563-577; these read GSYNYNTQAVN, QPSS…TQGN, and SLPN…VMNG. A nuclear localization domain region spans residues 583–612; sequence KRGRDDDDDGGRPTTSAPNLGPGMDMKRRK.

This sequence belongs to the EFG1/PHD1/stuA family.

It localises to the nucleus. Transcription factor that regulates asexual reproduction. Binds the StuA-response elements (StRE) with the consensus sequence 5'-(A/T)CGCG(T/A)N(A/C)-3' at the promoters of target genes. Required for rapid conidial germination, normal vegetative morphology, and protoperithecium formation. This is Cell pattern formation-associated protein asm-1 from Neurospora crassa (strain ATCC 24698 / 74-OR23-1A / CBS 708.71 / DSM 1257 / FGSC 987).